Here is a 228-residue protein sequence, read N- to C-terminus: uncharacterized protein (228 aa).

A disordered region spans residues 90–115 (TDESEESSSANNTTTTASHTLSNSKK). Residues 96–113 (SSSANNTTTTASHTLSNS) are compositionally biased toward low complexity.

The protein resides in the cytoplasm. It is found in the cell cortex. Functionally, deletion results in antifungal drug fluconazole-resistant phenotype. This is an uncharacterized protein from Saccharomyces cerevisiae (strain ATCC 204508 / S288c) (Baker's yeast).